The sequence spans 296 residues: MMFQQDYPHGFSLVETSLSYEMLDYFQNIVVSNSEDVASQQNSISSSSYSSATLSCSITEQKSHLTEKLSPLRERYGCGDFLSRKRRRRSEKTIVDKENQRMNHIAVERNRRKQMNHFLSILKSMMPLSYSQPNDQASIIEGTISYLKKLEQRLQSLEAQLKATKLNQSPNIFSDFFMFPQYSTATATATATASSSSSSHHHHKRLEVVADVEVTMVERHANIKVLTKTQPRLLFKIINEFNSLGLSTLHLNLTTSKDMSLFTFSVKVEADCQLTPSGNEVANTVHEVVRRVHKER.

The bHLH domain maps to 99 to 150; the sequence is NQRMNHIAVERNRRKQMNHFLSILKSMMPLSYSQPNDQASIIEGTISYLKKL.

Homodimer. In terms of tissue distribution, expressed constitutively in roots, stems, and flowers.

The protein resides in the nucleus. This chain is Transcription factor bHLH99 (BHLH99), found in Arabidopsis thaliana (Mouse-ear cress).